Consider the following 110-residue polypeptide: Inner membrane protein H108R (110 aa).

A helical transmembrane segment spans residues 10–32 (LIVIITILITTRELSTTMLIVSL).

It belongs to the asfivirus H108R family.

The protein localises to the virion membrane. This is Inner membrane protein H108R from African swine fever virus (isolate Pig/Kenya/KEN-50/1950) (ASFV).